A 309-amino-acid polypeptide reads, in one-letter code: MKQMNKLITGVVTLATVVTLSACQSSHNNTKLVSMKGDTITVSDFYNETKNTELAQKAMLSLVISRVFETQYANKVSDKEVEKAYKQTADQYGTSFKTVLAQSGLTPETYKKQIRLTKLVEYAVKEQAKNETISKKDYRQAYDAYTPTMTAEIMQFEKEEDAKAALEAVKAEGADFAAIAKEKTIAADKKTTYTFDSGETTLPAEVVRAASGLKEGNRSEIITALDPAISKRTYHIIKVTKKATKKADWKAYQKRLKDIIVTGKLKDPDFQNKVIAKALDKANVKIKDKAFANILAQFAKPNQKQPAQK.

The N-terminal stretch at 1 to 22 is a signal peptide; it reads MKQMNKLITGVVTLATVVTLSA. Residue cysteine 23 is the site of N-palmitoyl cysteine attachment. Cysteine 23 is lipidated: S-diacylglycerol cysteine. A PpiC domain is found at 146 to 241; that stretch reads TPTMTAEIMQ…RTYHIIKVTK (96 aa).

The protein belongs to the PrsA family.

It is found in the cell membrane. The enzyme catalyses [protein]-peptidylproline (omega=180) = [protein]-peptidylproline (omega=0). In terms of biological role, plays a major role in protein secretion by helping the post-translocational extracellular folding of several secreted proteins. This Streptococcus pyogenes serotype M6 (strain ATCC BAA-946 / MGAS10394) protein is Foldase protein PrsA 2.